A 148-amino-acid polypeptide reads, in one-letter code: Nucleoside diphosphate kinase 1 (148 aa).

ATP-binding residues include lysine 9, phenylalanine 57, arginine 85, threonine 91, arginine 102, and asparagine 112. Catalysis depends on histidine 115, which acts as the Pros-phosphohistidine intermediate.

This sequence belongs to the NDK family. Mg(2+) serves as cofactor.

The enzyme catalyses a 2'-deoxyribonucleoside 5'-diphosphate + ATP = a 2'-deoxyribonucleoside 5'-triphosphate + ADP. It catalyses the reaction a ribonucleoside 5'-diphosphate + ATP = a ribonucleoside 5'-triphosphate + ADP. Functionally, major role in the synthesis of nucleoside triphosphates other than ATP. The ATP gamma phosphate is transferred to the NDP beta phosphate via a ping-pong mechanism, using a phosphorylated active-site intermediate. This is Nucleoside diphosphate kinase 1 (NDKP1) from Mesembryanthemum crystallinum (Common ice plant).